Consider the following 159-residue polypeptide: Ribosome maturation factor RimP (159 aa).

The protein belongs to the RimP family.

It localises to the cytoplasm. Required for maturation of 30S ribosomal subunits. This chain is Ribosome maturation factor RimP, found in Streptococcus pneumoniae (strain 70585).